We begin with the raw amino-acid sequence, 442 residues long: Cell division protein FtsA (442 aa).

Residues 401–428 (VTSYDNDSYDAPEETVYDEPEQKKSDED) are disordered. The span at 407 to 419 (DSYDAPEETVYDE) shows a compositional bias: acidic residues.

Belongs to the FtsA/MreB family. As to quaternary structure, self-interacts. Interacts with FtsZ.

The protein localises to the cell membrane. In terms of biological role, cell division protein that is involved in the assembly of the Z ring. May serve as a membrane anchor for the Z ring. This Enterococcus hirae protein is Cell division protein FtsA.